The chain runs to 970 residues: Anaphase-promoting complex subunit 3 (970 aa).

TPR repeat units follow at residues 35 to 68 (EDNLFKIAQIYYQMGKINQCLLILQQHPQITMIK), 74 to 107 (ALSNYDLGNIQEAESSIIKCCIYFEKYFQPNNNN), 142 to 175 (NNNSNSNNNENEYYGIYSDILCEFDDIVDINSIS), and 185 to 218 (GSVYYLMGLISKRKNQKEKAIKYLKKSVYTYPFL). Positions 106–149 (NNNNNNNNNNNNNNNNNNNNNNNKDKCNNSNKNNDSNNNSNSNN) are disordered. The segment at 274 to 300 (KVNNNNNNNNNNNNNINNNNSSNKNNE) is disordered. TPR repeat units follow at residues 319-353 (IKPNNFIKPPYHPNHRVGLTPSSFYDSSIHITPIN) and 361-394 (TNQQQQQQQQQQPQQPSQQNLQKYNNRYFVTPQT). 3 disordered regions span residues 358–379 (IQQTNQQQQQQQQQQPQQPSQQ), 414–525 (PIPM…TTTT), and 556–582 (SSLSDDDYDEENHHYQQHHHLHHHNKS). The segment covering 359 to 379 (QQTNQQQQQQQQQQPQQPSQQ) has biased composition (low complexity). Residues 424 to 443 (SKGSQHPPSSNSQTPYTPST) are compositionally biased toward polar residues. The span at 446–460 (VHHHQKQQPHQHKKS) shows a compositional bias: basic residues. Positions 500 to 525 (TSSTSKQQQQQQQTKQQTTTTTTTTT) are enriched in low complexity. 9 TPR repeats span residues 546 to 580 (TEEFSLKSLSSSLSDDDYDEENHHYQQHHHLHHHN), 636 to 671 (LELFFILADSYRLLCLYLCKEAIESFKRLSEEQYRT), 672 to 705 (GWVLTKVAKAYHELIDYKEARSIFQEVSQMEPYR), 740 to 773 (PYSWVVVGNCFSLQRDHEAAIKLFRRAIQLDPDM), 775 to 807 (YAYTLCGHEYLANDELELALNAFRMAIRCDPRH), 808 to 841 (YNAFYGIGLIYYRQEKYNLAEYHFRKALSINESS), 843 to 876 (VLCCYLGMTLQHNPNKIQDGIDMLYRSIEIQPKN), 878 to 910 (FAKFKLAAFLFANQQYHHAIDQLLEFKEIEPKE), and 911 to 944 (TPIYILLGKCYKQLGELDKALDSLNTALDLDPKN). Basic residues predominate over residues 570-580 (YQQHHHLHHHN).

This sequence belongs to the APC3/CDC27 family. As to quaternary structure, the APC/C is composed of at least 13 subunits that stay tightly associated throughout the cell cycle: anapc1, anapc2, anapc3, anapc4, anapc5, anapc6, anapc7, anapc8, anapc10, anapc11, cdc20, cdc26 and cdh1.

The protein resides in the nucleus. Its pathway is protein modification; protein ubiquitination. Functionally, component of the anaphase promoting complex/cyclosome (APC/C), a cell cycle-regulated E3 ubiquitin-protein ligase complex that controls progression through mitosis and the G1 phase of the cell cycle. In Dictyostelium discoideum (Social amoeba), this protein is Anaphase-promoting complex subunit 3 (anapc3).